The following is a 227-amino-acid chain: Arginine ABC transporter permease protein ArtM (227 aa).

Residues 13 to 209 (IPTSLLLTVV…IITGIATLLL (197 aa)) form the ABC transmembrane type-1 domain. 5 consecutive transmembrane segments (helical) span residues 17–37 (LLLT…LTFL), 51–71 (LYLT…IYAG), 78–98 (IIDS…ALAL), 155–175 (IILV…DIMG), and 188–208 (LTIY…ATLL).

It belongs to the binding-protein-dependent transport system permease family. HisMQ subfamily. In terms of assembly, the complex is composed of two ATP-binding proteins (ArtP), two transmembrane proteins (ArtM and ArtQ) and a solute-binding protein (ArtI).

Its subcellular location is the cell inner membrane. Part of the ABC transporter complex ArtPIQM involved in arginine transport. Probably responsible for the translocation of the substrate across the membrane. The protein is Arginine ABC transporter permease protein ArtM (artM) of Haemophilus influenzae (strain ATCC 51907 / DSM 11121 / KW20 / Rd).